Consider the following 365-residue polypeptide: S-adenosylmethionine:tRNA ribosyltransferase-isomerase (365 aa).

This sequence belongs to the QueA family. In terms of assembly, monomer.

Its subcellular location is the cytoplasm. The catalysed reaction is 7-aminomethyl-7-carbaguanosine(34) in tRNA + S-adenosyl-L-methionine = epoxyqueuosine(34) in tRNA + adenine + L-methionine + 2 H(+). Its pathway is tRNA modification; tRNA-queuosine biosynthesis. Functionally, transfers and isomerizes the ribose moiety from AdoMet to the 7-aminomethyl group of 7-deazaguanine (preQ1-tRNA) to give epoxyqueuosine (oQ-tRNA). The chain is S-adenosylmethionine:tRNA ribosyltransferase-isomerase from Rickettsia peacockii (strain Rustic).